The sequence spans 149 residues: D-aminoacyl-tRNA deacylase (149 aa).

A Gly-cisPro motif, important for rejection of L-amino acids motif is present at residues 141-142; the sequence is GP.

It belongs to the DTD family. In terms of assembly, homodimer.

It localises to the cytoplasm. The catalysed reaction is glycyl-tRNA(Ala) + H2O = tRNA(Ala) + glycine + H(+). It carries out the reaction a D-aminoacyl-tRNA + H2O = a tRNA + a D-alpha-amino acid + H(+). Its function is as follows. An aminoacyl-tRNA editing enzyme that deacylates mischarged D-aminoacyl-tRNAs. Also deacylates mischarged glycyl-tRNA(Ala), protecting cells against glycine mischarging by AlaRS. Acts via tRNA-based rather than protein-based catalysis; rejects L-amino acids rather than detecting D-amino acids in the active site. By recycling D-aminoacyl-tRNA to D-amino acids and free tRNA molecules, this enzyme counteracts the toxicity associated with the formation of D-aminoacyl-tRNA entities in vivo and helps enforce protein L-homochirality. The protein is D-aminoacyl-tRNA deacylase of Streptomyces griseus subsp. griseus (strain JCM 4626 / CBS 651.72 / NBRC 13350 / KCC S-0626 / ISP 5235).